The chain runs to 762 residues: cGMP-dependent protein kinase 2 (762 aa).

Residues methionine 1 to alanine 25 form a disordered region. Glycine 2 carries N-myristoyl glycine lipidation. Residues serine 110 and serine 117 each carry the phosphoserine modification. The disordered stretch occupies residues leucine 112–lysine 138. Residues phenylalanine 168–serine 283 form a cGMP-binding, high affinity; cAMP-binding, moderate affinity region. 3',5'-cyclic GMP-binding positions include glycine 232 to alanine 235, arginine 242 to threonine 243, lysine 347, glycine 356 to alanine 359, arginine 366 to serine 367, aspartate 412, and arginine 415. The interval leucine 286–histidine 416 is cGMP-binding, high affinity; cAMP-binding, low affinity. Position 431 is a phosphoserine (serine 431). One can recognise a Protein kinase domain in the interval leucine 453–leucine 711. ATP is bound by residues leucine 459–valine 467 and lysine 482. The active-site Proton acceptor is aspartate 576. Threonine 609 is subject to Phosphothreonine. The AGC-kinase C-terminal domain maps to asparagine 712–phenylalanine 762. Positions tyrosine 740–phenylalanine 762 are disordered.

This sequence belongs to the protein kinase superfamily. AGC Ser/Thr protein kinase family. cGMP subfamily. As to quaternary structure, interacts with GRIA1/GLUR1. In terms of processing, myristoylation mediates membrane localization. As to expression, highly expressed in intestinal mucosa and is 20 times less abundant in brain and kidney. Expressed in jejunum, in the apical domain of the villus epithelium.

It is found in the apical cell membrane. The protein localises to the cell membrane. The enzyme catalyses L-seryl-[protein] + ATP = O-phospho-L-seryl-[protein] + ADP + H(+). The catalysed reaction is L-threonyl-[protein] + ATP = O-phospho-L-threonyl-[protein] + ADP + H(+). Binding of cGMP results in enzyme activation. In terms of biological role, crucial regulator of intestinal secretion and bone growth. Phosphorylates and activates CFTR on the plasma membrane. Plays a key role in intestinal secretion by regulating cGMP-dependent translocation of CFTR in jejunum. Acts downstream of NMDAR to activate the plasma membrane accumulation of GRIA1/GLUR1 in synapse and increase synaptic plasticity. Phosphorylates GRIA1/GLUR1 at Ser-863. Acts as regulator of gene expression and activator of the extracellular signal-regulated kinases MAPK3/ERK1 and MAPK1/ERK2 in mechanically stimulated osteoblasts. Under fluid shear stress, mediates ERK activation and subsequent induction of FOS, FOSL1/FRA1, FOSL2/FRA2 and FOSB that play a key role in the osteoblast anabolic response to mechanical stimulation. The protein is cGMP-dependent protein kinase 2 (Prkg2) of Rattus norvegicus (Rat).